The primary structure comprises 310 residues: Porphobilinogen deaminase (310 aa).

The residue at position 242 (Cys-242) is an S-(dipyrrolylmethanemethyl)cysteine.

The protein belongs to the HMBS family. Monomer. Requires dipyrromethane as cofactor.

It catalyses the reaction 4 porphobilinogen + H2O = hydroxymethylbilane + 4 NH4(+). It functions in the pathway porphyrin-containing compound metabolism; protoporphyrin-IX biosynthesis; coproporphyrinogen-III from 5-aminolevulinate: step 2/4. In terms of biological role, tetrapolymerization of the monopyrrole PBG into the hydroxymethylbilane pre-uroporphyrinogen in several discrete steps. The polypeptide is Porphobilinogen deaminase (Shewanella sp. (strain W3-18-1)).